The following is a 528-amino-acid chain: Membrane protein insertase YidC (528 aa).

5 helical membrane-spanning segments follow: residues 13–33, 336–356, 406–426, 446–466, and 481–501; these read ILLA…FFIP, WGWA…PLTY, LPIL…LNAI, YFIL…ITPM, and PVIF…YWFV.

This sequence belongs to the OXA1/ALB3/YidC family. Type 1 subfamily. In terms of assembly, interacts with the Sec translocase complex via SecD. Specifically interacts with transmembrane segments of nascent integral membrane proteins during membrane integration.

The protein resides in the cell inner membrane. Its function is as follows. Required for the insertion and/or proper folding and/or complex formation of integral membrane proteins into the membrane. Involved in integration of membrane proteins that insert both dependently and independently of the Sec translocase complex, as well as at least some lipoproteins. Aids folding of multispanning membrane proteins. The sequence is that of Membrane protein insertase YidC from Campylobacter jejuni subsp. jejuni serotype O:2 (strain ATCC 700819 / NCTC 11168).